A 248-amino-acid chain; its full sequence is Aspartate/glutamate leucyltransferase (248 aa).

This sequence belongs to the R-transferase family. Bpt subfamily.

It is found in the cytoplasm. It catalyses the reaction N-terminal L-glutamyl-[protein] + L-leucyl-tRNA(Leu) = N-terminal L-leucyl-L-glutamyl-[protein] + tRNA(Leu) + H(+). It carries out the reaction N-terminal L-aspartyl-[protein] + L-leucyl-tRNA(Leu) = N-terminal L-leucyl-L-aspartyl-[protein] + tRNA(Leu) + H(+). In terms of biological role, functions in the N-end rule pathway of protein degradation where it conjugates Leu from its aminoacyl-tRNA to the N-termini of proteins containing an N-terminal aspartate or glutamate. This chain is Aspartate/glutamate leucyltransferase, found in Methylobacillus flagellatus (strain ATCC 51484 / DSM 6875 / VKM B-1610 / KT).